The sequence spans 494 residues: Aspartyl/glutamyl-tRNA(Asn/Gln) amidotransferase subunit B (494 aa).

The disordered stretch occupies residues 475–494 (TSGRADPKATNQMLAKKLKG).

The protein belongs to the GatB/GatE family. GatB subfamily. Heterotrimer of A, B and C subunits.

The catalysed reaction is L-glutamyl-tRNA(Gln) + L-glutamine + ATP + H2O = L-glutaminyl-tRNA(Gln) + L-glutamate + ADP + phosphate + H(+). It carries out the reaction L-aspartyl-tRNA(Asn) + L-glutamine + ATP + H2O = L-asparaginyl-tRNA(Asn) + L-glutamate + ADP + phosphate + 2 H(+). In terms of biological role, allows the formation of correctly charged Asn-tRNA(Asn) or Gln-tRNA(Gln) through the transamidation of misacylated Asp-tRNA(Asn) or Glu-tRNA(Gln) in organisms which lack either or both of asparaginyl-tRNA or glutaminyl-tRNA synthetases. The reaction takes place in the presence of glutamine and ATP through an activated phospho-Asp-tRNA(Asn) or phospho-Glu-tRNA(Gln). The polypeptide is Aspartyl/glutamyl-tRNA(Asn/Gln) amidotransferase subunit B (Acaryochloris marina (strain MBIC 11017)).